Here is a 362-residue protein sequence, read N- to C-terminus: DNA replication and repair protein RecF (362 aa).

30 to 37 (GDNAQGKT) contacts ATP.

This sequence belongs to the RecF family.

It localises to the cytoplasm. In terms of biological role, the RecF protein is involved in DNA metabolism; it is required for DNA replication and normal SOS inducibility. RecF binds preferentially to single-stranded, linear DNA. It also seems to bind ATP. In Agathobacter rectalis (strain ATCC 33656 / DSM 3377 / JCM 17463 / KCTC 5835 / VPI 0990) (Eubacterium rectale), this protein is DNA replication and repair protein RecF.